The chain runs to 535 residues: MNADREHQCDVLVIGSGAAGLSLALQVAQYGKVIVLSKGPRSEGATFYAQGGIAAVFDESDSIESHVQDTLIAGAGICDEQTVRFIAEHAKECVQWLIDGGVPFDKEEDSDNDHPRYHLTREGGHSHRRILHAADATGMAMQTSLQDNAHNHPNITVLERHNALDLITEDKIGGDANKVVGAYVWNRNAEHVETIRAKFVVLATGGASKVYQYTSNPDVSSGDGIAMAWRAGCRVANLEFNQFHPTCLYHPEARNFLLTEALRGEGAYLRRPDGSRFMPDFDERAELAPRDIVARAIDFEMKRLGADCMYLDISHKPADFIEKHFPTIYSRLMDLGIDMTKEPIPIVPAAHYTCGGVMVNPQGQTDLKQLYAIGEVSYTGLHGANRMASNSLLECVVYAWSASQDIIAQLPNASMPESLPAWDESQVTCSDEEVVLQHNWHELRLFMWDYMGIVRTNKRLERAMRRIQLLQQETHEYYSNFRVSNNLLEMRNLLQVAELMVRCAMQRKESRGLHYTLDYPDQLAESGPTILVPEK.

Residues 16–19, lysine 38, 45–52, and aspartate 223 contribute to the FAD site; these read SGAA and ATFYAQGG. Arginine 290 (proton donor/acceptor) is an active-site residue. Residues glutamate 375 and 391–392 each bind FAD; that span reads SL.

Belongs to the FAD-dependent oxidoreductase 2 family. NadB subfamily. The cofactor is FAD.

The protein resides in the cytoplasm. It catalyses the reaction L-aspartate + O2 = iminosuccinate + H2O2. It participates in cofactor biosynthesis; NAD(+) biosynthesis; iminoaspartate from L-aspartate (oxidase route): step 1/1. Catalyzes the oxidation of L-aspartate to iminoaspartate, the first step in the de novo biosynthesis of NAD(+). The chain is L-aspartate oxidase (nadB) from Vibrio cholerae serotype O1 (strain ATCC 39315 / El Tor Inaba N16961).